We begin with the raw amino-acid sequence, 133 residues long: Ribosome-binding factor A (133 aa).

This sequence belongs to the RbfA family. In terms of assembly, monomer. Binds 30S ribosomal subunits, but not 50S ribosomal subunits or 70S ribosomes.

The protein localises to the cytoplasm. In terms of biological role, one of several proteins that assist in the late maturation steps of the functional core of the 30S ribosomal subunit. Associates with free 30S ribosomal subunits (but not with 30S subunits that are part of 70S ribosomes or polysomes). Required for efficient processing of 16S rRNA. May interact with the 5'-terminal helix region of 16S rRNA. The sequence is that of Ribosome-binding factor A from Chlamydia muridarum (strain MoPn / Nigg).